The chain runs to 356 residues: Histidinol-phosphate aminotransferase 1 (356 aa).

N6-(pyridoxal phosphate)lysine is present on K217.

Belongs to the class-II pyridoxal-phosphate-dependent aminotransferase family. Histidinol-phosphate aminotransferase subfamily. As to quaternary structure, homodimer. Pyridoxal 5'-phosphate is required as a cofactor.

The catalysed reaction is L-histidinol phosphate + 2-oxoglutarate = 3-(imidazol-4-yl)-2-oxopropyl phosphate + L-glutamate. It participates in amino-acid biosynthesis; L-histidine biosynthesis; L-histidine from 5-phospho-alpha-D-ribose 1-diphosphate: step 7/9. This chain is Histidinol-phosphate aminotransferase 1, found in Burkholderia mallei (strain ATCC 23344).